The following is a 200-amino-acid chain: MFAYFKGSLVTALPEEAVIDVSGVAYRMLISATTFRQLPDEGSQVLLYAHLSVREDALQLYGFFKEEERQLFRLLLLTSGVGPKLALAVLSGLQVPEVHEAIMANEPERLYGVSGVGKKTAARIILELRDKILKLPLVTPAAGKAAMPSHHVKDDAVHALVTLGFSRLLAQKAVSALLEEKPEQSVEEVIKYALATIHNS.

Residues 1 to 64 form a domain I region; sequence MFAYFKGSLV…EDALQLYGFF (64 aa). The interval 65-143 is domain II; sequence KEEERQLFRL…KLPLVTPAAG (79 aa). The interval 143–147 is flexible linker; the sequence is GKAAM. The interval 148 to 200 is domain III; the sequence is PSHHVKDDAVHALVTLGFSRLLAQKAVSALLEEKPEQSVEEVIKYALATIHNS.

Belongs to the RuvA family. In terms of assembly, homotetramer. Forms an RuvA(8)-RuvB(12)-Holliday junction (HJ) complex. HJ DNA is sandwiched between 2 RuvA tetramers; dsDNA enters through RuvA and exits via RuvB. An RuvB hexamer assembles on each DNA strand where it exits the tetramer. Each RuvB hexamer is contacted by two RuvA subunits (via domain III) on 2 adjacent RuvB subunits; this complex drives branch migration. In the full resolvosome a probable DNA-RuvA(4)-RuvB(12)-RuvC(2) complex forms which resolves the HJ.

It is found in the cytoplasm. Functionally, the RuvA-RuvB-RuvC complex processes Holliday junction (HJ) DNA during genetic recombination and DNA repair, while the RuvA-RuvB complex plays an important role in the rescue of blocked DNA replication forks via replication fork reversal (RFR). RuvA specifically binds to HJ cruciform DNA, conferring on it an open structure. The RuvB hexamer acts as an ATP-dependent pump, pulling dsDNA into and through the RuvAB complex. HJ branch migration allows RuvC to scan DNA until it finds its consensus sequence, where it cleaves and resolves the cruciform DNA. The chain is Holliday junction branch migration complex subunit RuvA from Chlorobium phaeobacteroides (strain DSM 266 / SMG 266 / 2430).